The sequence spans 1114 residues: Proto-oncogene tyrosine-protein kinase receptor Ret (1114 aa).

Positions 1-28 (MAKATSGAAGLRLLLLLLLPLLGKVALG) are cleaved as a signal peptide. Positions 29–153 (LYFSRDAYWE…RVYFSFFNTS (125 aa)) are cadherin-like region 1 (CLD1). Residues 29-635 (LYFSRDAYWE…QDPLCDELCR (607 aa)) are Extracellular-facing. N98 carries N-linked (GlcNAc...) asparagine glycosylation. Cysteines 137 and 142 form a disulfide. N151 is a glycosylation site (N-linked (GlcNAc...) asparagine). Cystine bridges form between C157–C197 and C166–C243. One can recognise a Cadherin domain in the interval 168 to 272 (PETRPSFRIR…YDEDDSAPTF (105 aa)). Ca(2+) is bound by residues E178 and N179. N-linked (GlcNAc...) asparagine glycosylation is present at N199. Positions 230, 232, 264, 265, 266, 267, 268, 300, and 302 each coordinate Ca(2+). The interval 265-379 (EDDSAPTFPA…MQLAVLVNDS (115 aa)) is cadherin-like region 3 (CLD3). Residues N336, N343, N361, N367, and N377 are each glycosylated (N-linked (GlcNAc...) asparagine). D378 contacts Ca(2+). N-linked (GlcNAc...) asparagine glycosylation is present at N394. The tract at residues 405–506 (PSTYSLSVSR…QAQLLVTVEG (102 aa)) is cadherin-like region 4 (CLD4). C426 and C430 are disulfide-bonded. N-linked (GlcNAc...) asparagine glycans are attached at residues N448 and N468. Cystine bridges form between C449-C478, C515-C531, C519-C541, and C528-C558. N554 is a glycosylation site (N-linked (GlcNAc...) asparagine). The Ca(2+) site is built by T564, C565, D567, H569, E574, and D584. Cystine bridges form between C565/C581, C570/C585, C609/C620, C611/C618, and C630/C634. The chain crosses the membrane as a helical span at residues 636-657 (TVIAAAVLFSFIVSVLLSAFCI). The Cytoplasmic segment spans residues 658–1114 (HCYHKFAHKP…AAKLMDTFDS (457 aa)). The residue at position 687 (Y687) is a Phosphotyrosine; by autocatalysis. An O-linked (GlcNAc) serine glycan is attached at S688. S696 carries the post-translational modification Phosphoserine. One can recognise a Protein kinase domain in the interval 724-1016 (LVLGKTLGEG…KMMVKRRDYL (293 aa)). ATP is bound by residues 730-738 (LGEGEFGKV) and K758. Position 805–807 (805–807 (EYA)) interacts with semaxanib. A phosphotyrosine; by autocatalysis mark is found at Y806, Y809, and Y826. Residue D874 is the Proton acceptor of the active site. 8 positions are modified to phosphotyrosine; by autocatalysis: Y900, Y905, Y981, Y1015, Y1029, Y1062, Y1090, and Y1096.

This sequence belongs to the protein kinase superfamily. Tyr protein kinase family. In terms of assembly, phosphorylated form interacts with the PBT domain of DOK2, DOK4 and DOK5. The phosphorylated form interacts with PLCG1 and GRB7. Interacts (not phosphorylated) with PTK2/FAK1 (via FERM domain). Extracellular cell-membrane anchored RET cadherin fragments form complex in neurons with reduced trophic status, preferentially at the contact sites between somas. Interacts with AIP in the pituitary gland; this interaction prevents the formation of the AIP-survivin complex. Interacts (inactive) with CBLC and CD2AP; dissociates upon activation by GDNF which increases CBLC:CD2AP interaction. It depends on Ca(2+) as a cofactor. Autophosphorylated on C-terminal tyrosine residues upon ligand stimulation. In terms of processing, proteolytically cleaved by caspase-3. The soluble RET kinase fragment is able to induce cell death. The extracellular cell-membrane anchored RET cadherin fragment accelerates cell adhesion in sympathetic neurons.

The protein localises to the cell membrane. It is found in the endosome membrane. The catalysed reaction is L-tyrosyl-[protein] + ATP = O-phospho-L-tyrosyl-[protein] + ADP + H(+). With respect to regulation, repressed by 4-(3-hydroxyanilino)-quinolines derivatives, indolin-2-one-derivatives, 2-(alkylsulfanyl)-4-(3-thienyl) nicotinonitrile analogs, 3- and 4-substituted beta-carbolin-1-ones, vandetanib, motesanib, sorafenib (BAY 43-9006), cabozantinib (XL184), lenvatinib, sunitinib, nintedanib, and withaferin A (WA). Inactivation by sorafenib both reduces kinase activity and promotes lysosomal degradation. Its function is as follows. Receptor tyrosine-protein kinase involved in numerous cellular mechanisms including cell proliferation, neuronal navigation, cell migration, and cell differentiation in response to glia cell line-derived growth family factors (GDNF, NRTN, ARTN, PSPN and GDF15). In contrast to most receptor tyrosine kinases, RET requires not only its cognate ligands but also coreceptors, for activation. GDNF ligands (GDNF, NRTN, ARTN, PSPN and GDF15) first bind their corresponding GDNFR coreceptors (GFRA1, GFRA2, GFRA3, GFRA4 and GFRAL, respectively), triggering RET autophosphorylation and activation, leading to activation of downstream signaling pathways, including the MAPK- and AKT-signaling pathways. Acts as a dependence receptor via the GDNF-GFRA1 signaling: in the presence of the ligand GDNF in somatotrophs within pituitary, promotes survival and down regulates growth hormone (GH) production, but triggers apoptosis in absence of GDNF. Required for the molecular mechanisms orchestration during intestine organogenesis via the ARTN-GFRA3 signaling: involved in the development of enteric nervous system and renal organogenesis during embryonic life, and promotes the formation of Peyer's patch-like structures, a major component of the gut-associated lymphoid tissue. Mediates, through interaction with GDF15-receptor GFRAL, GDF15-induced cell-signaling in the brainstem which triggers an aversive response, characterized by nausea, vomiting, and/or loss of appetite in response to various stresses. Modulates cell adhesion via its cleavage by caspase in sympathetic neurons and mediates cell migration in an integrin (e.g. ITGB1 and ITGB3)-dependent manner. Also active in the absence of ligand, triggering apoptosis through a mechanism that requires receptor intracellular caspase cleavage. Triggers the differentiation of rapidly adapting (RA) mechanoreceptors. Involved in the development of the neural crest. Regulates nociceptor survival and size. Phosphorylates PTK2/FAK1. In terms of biological role, isoform 1 in complex with GFRAL induces higher activation of MAPK-signaling pathway than isoform 2 in complex with GFRAL. The protein is Proto-oncogene tyrosine-protein kinase receptor Ret of Homo sapiens (Human).